The primary structure comprises 110 residues: SLYAPSAVVISKTQGASADAPAQRAVTLRCLPVGGDHPAPEKACAALREAGGDPAALPRYVEDTGRVCTREYRPVTVSVQGVWDGRRIDHAQTFSNSCELEKQTASVYAF.

Cystine bridges form between Cys-30–Cys-44 and Cys-68–Cys-98.

It belongs to the protease inhibitor I16 (SSI) family. Homodimer.

Its subcellular location is the secreted. In terms of biological role, strong inhibitor of subtilisin BPN'. The protein is Subtilisin inhibitor-like protein 1 of Streptomyces cacaoi.